We begin with the raw amino-acid sequence, 86 residues long: Splicing factor 3B subunit 5 (86 aa).

The residue at position 2 (T2) is an N-acetylthreonine. The residue at position 9 (S9) is a Phosphoserine. The tract at residues 15-76 is interaction with SF3B1 and SF3B3; that stretch reads QSKYIGTGHA…NLMEKMLQPC (62 aa). The residue at position 17 (K17) is an N6-acetyllysine.

It belongs to the SF3B5 family. Component of the 17S U2 SnRNP complex, a ribonucleoprotein complex that contains small nuclear RNA (snRNA) U2 and a number of specific proteins. Part of the SF3B subcomplex of the 17S U2 SnRNP complex. SF3B associates with the splicing subcomplex SF3A and a 12S RNA unit to form the U2 small nuclear ribonucleoproteins complex (U2 snRNP). Within the SF3B subcomplex, interacts directly with SF3B1 (via HEAT domain) and SF3B3. Component of the minor spliceosome, which splices U12-type introns.

It is found in the nucleus. Its function is as follows. Component of the 17S U2 SnRNP complex of the spliceosome, a large ribonucleoprotein complex that removes introns from transcribed pre-mRNAs. The 17S U2 SnRNP complex (1) directly participates in early spliceosome assembly and (2) mediates recognition of the intron branch site during pre-mRNA splicing by promoting the selection of the pre-mRNA branch-site adenosine, the nucleophile for the first step of splicing. Within the 17S U2 SnRNP complex, SF3B4 is part of the SF3B subcomplex, which is required for 'A' complex assembly formed by the stable binding of U2 snRNP to the branchpoint sequence in pre-mRNA. Sequence independent binding of SF3A and SF3B subcomplexes upstream of the branch site is essential, it may anchor U2 snRNP to the pre-mRNA. Also acts as a component of the minor spliceosome, which is involved in the splicing of U12-type introns in pre-mRNAs. This Bos taurus (Bovine) protein is Splicing factor 3B subunit 5 (SF3B5).